The sequence spans 299 residues: Ophiobolin family sesterterpenoid biosynthesis cluster acetyltransferase (299 aa).

The first 20 residues, 1 to 20 (MYFFRALLSPVVLWPALVSG), serve as a signal peptide directing secretion. Residues Asn-28, Asn-58, Asn-77, Asn-126, Asn-177, Asn-212, and Asn-282 are each glycosylated (N-linked (GlcNAc...) asparagine).

It belongs to the bfoA family.

It functions in the pathway secondary metabolite biosynthesis; terpenoid biosynthesis. In terms of biological role, acetyltransferase; part of the gene cluster that mediates the biosynthesis of an ophiobolin family sesterterpenoid. Sesterterpenoid synthase; part of the gene cluster that mediates the biosynthesis of an ophiobolin family sesterterpenoid. The protein is Ophiobolin family sesterterpenoid biosynthesis cluster acetyltransferase of Aspergillus terreus.